The chain runs to 906 residues: NACHT, LRR and PYD domains-containing protein 1b allele 4 (906 aa).

A disordered region spans residues 1 to 22; that stretch reads MEESPPKQKSNTKVAQHEGQQD. Residues 126-435 enclose the NACHT domain; that stretch reads QLVIIEGAAG…EFFAAISCIL (310 aa). 132 to 139 provides a ligand contact to ATP; the sequence is GAAGIGKS. LRR repeat units follow at residues 627-647 and 684-704; these read NLEG…QSLC and SLTE…RMLC. Residues 789 to 906 form the FIIND (incomplete) domain; sequence FWGPTGPVAT…FQEHGSRNAR (118 aa).

This sequence belongs to the NLRP family. As to expression, expressed in macrophages.

It is found in the cytoplasm. The protein localises to the cytosol. Probable inactive allele of Nlrp1b, which lacks a CARD domain, suggesting that it is not able to form an inflammasome. Contrary to Nlrp1b allele 1, allele 4 is not activated by B.anthracis lethal toxin and no other activation signal is reported. The sequence is that of NACHT, LRR and PYD domains-containing protein 1b allele 4 from Mus musculus (Mouse).